Consider the following 60-residue polypeptide: Large ribosomal subunit protein uL30 (60 aa).

This sequence belongs to the universal ribosomal protein uL30 family. In terms of assembly, part of the 50S ribosomal subunit.

The sequence is that of Large ribosomal subunit protein uL30 from Shewanella sp. (strain MR-7).